The sequence spans 186 residues: TATA-box-binding protein (186 aa).

2 tandem repeats follow at residues 10–86 and 101–179.

It belongs to the TBP family.

General factor that plays a role in the activation of archaeal genes transcribed by RNA polymerase. Binds specifically to the TATA box promoter element which lies close to the position of transcription initiation. The protein is TATA-box-binding protein of Haloarcula marismortui (strain ATCC 43049 / DSM 3752 / JCM 8966 / VKM B-1809) (Halobacterium marismortui).